The following is a 37-amino-acid chain: Large ribosomal subunit protein bL36c (37 aa).

The protein belongs to the bacterial ribosomal protein bL36 family.

It is found in the plastid. It localises to the chloroplast. This is Large ribosomal subunit protein bL36c from Lolium perenne (Perennial ryegrass).